The sequence spans 208 residues: Predicted GPI-anchored protein 37 (208 aa).

Residues 1 to 18 form the signal peptide; it reads MLFTQLIILLTVTSQALS. The disordered stretch occupies residues 33-93; that stretch reads TKRLGGGSRG…SSSSSGSRNW (61 aa). Residues 36 to 53 are compositionally biased toward gly residues; it reads LGGGSRGGSSSGSRGGSS. A compositionally biased stretch (low complexity) spans 54 to 63; that stretch reads SGSSSGSSSG. N173 carries N-linked (GlcNAc...) asparagine glycosylation. S185 carries GPI-anchor amidated serine lipidation. The propeptide at 186–208 is removed in mature form; it reads SSLNIPSTHFYLIGFAAAYSIVL.

The protein belongs to the PGA37 family.

It is found in the cell membrane. Functionally, predicted GPI-anchored protein which may have a role during host infection. The polypeptide is Predicted GPI-anchored protein 37 (PGA37) (Candida albicans (strain SC5314 / ATCC MYA-2876) (Yeast)).